The chain runs to 219 residues: Tetratricopeptide repeat protein 9A (219 aa).

The disordered stretch occupies residues 1–49 (MERKGLAARSSGNPSPPALGEGPRPVPPPCVPSGGGAPERGQAGTAAEP). A TPR 1 repeat occupies 56–89 (AHEFKSQGAQCYKDKKFREAIGKYHRALLELKGL). The segment at 94-115 (EERDARPASSAGVPKSSRLSEE) is disordered. Ser-102 is modified (phosphoserine). TPR repeat units follow at residues 125-160 (IDCY…EGEN) and 161-194 (FKAL…QPTD).

The protein belongs to the TTC9 family.

The protein is Tetratricopeptide repeat protein 9A (Ttc9) of Mus musculus (Mouse).